The primary structure comprises 313 residues: Ribosomal protein uL3 glutamine methyltransferase (313 aa).

This sequence belongs to the protein N5-glutamine methyltransferase family. PrmB subfamily.

The catalysed reaction is L-glutaminyl-[ribosomal protein uL3] + S-adenosyl-L-methionine = N(5)-methyl-L-glutaminyl-[ribosomal protein uL3] + S-adenosyl-L-homocysteine + H(+). In terms of biological role, methylates large ribosomal subunit protein uL3 on a specific glutamine residue. This chain is Ribosomal protein uL3 glutamine methyltransferase, found in Pasteurella multocida (strain Pm70).